A 283-amino-acid polypeptide reads, in one-letter code: Thymidylate synthase (283 aa).

Position 22 (Arg-22) interacts with dUMP. Cys-160 functions as the Nucleophile in the catalytic mechanism. Residues Arg-180 to Asp-183, Asn-191, and His-221 to Tyr-223 contribute to the dUMP site. Residue Asp-183 coordinates (6R)-5,10-methylene-5,6,7,8-tetrahydrofolate. Ser-282 serves as a coordination point for (6R)-5,10-methylene-5,6,7,8-tetrahydrofolate.

The protein belongs to the thymidylate synthase family. Bacterial-type ThyA subfamily. As to quaternary structure, homodimer.

It localises to the cytoplasm. It catalyses the reaction dUMP + (6R)-5,10-methylene-5,6,7,8-tetrahydrofolate = 7,8-dihydrofolate + dTMP. It participates in pyrimidine metabolism; dTTP biosynthesis. In terms of biological role, catalyzes the reductive methylation of 2'-deoxyuridine-5'-monophosphate (dUMP) to 2'-deoxythymidine-5'-monophosphate (dTMP) while utilizing 5,10-methylenetetrahydrofolate (mTHF) as the methyl donor and reductant in the reaction, yielding dihydrofolate (DHF) as a by-product. This enzymatic reaction provides an intracellular de novo source of dTMP, an essential precursor for DNA biosynthesis. In Aliivibrio fischeri (strain ATCC 700601 / ES114) (Vibrio fischeri), this protein is Thymidylate synthase.